We begin with the raw amino-acid sequence, 390 residues long: MYIAGVMSGTSLDGIDVALVHIEGSGVDSKIELIHFTTVPFCNDMKNEIQQALSIETSNVQLICSLNFKLGLCFANAVKEVCKEANFPLRQLDLIGSHGQTIYHQPKQEGNIISSTLQIGEPAVIAYETNTTVISNFRTMDMAAGGQGAPLVPYSEIILYRHQTKNRLLQNIGGIGNVTVVPSKRSKESVIAFDTGPGNMVIDEVCQRLFHVPYDQNGWIAKQGVVVDEILTYCMNHPFLNMKPPKSTGREQFGEAFVTELLNRFKKHSKENILATVTMFTACSIVHHYKAFILPYYEIDEVILGGGGSYNNTLVEMLRNGLREEKCSICIQEDIGHSSAAKEAIAFAILANETYHRNPSNVLSATGAKNSVILGNITFPPYADENEANI.

9–16 (GTSLDGID) is an ATP binding site.

Belongs to the anhydro-N-acetylmuramic acid kinase family.

The catalysed reaction is 1,6-anhydro-N-acetyl-beta-muramate + ATP + H2O = N-acetyl-D-muramate 6-phosphate + ADP + H(+). Its pathway is amino-sugar metabolism; 1,6-anhydro-N-acetylmuramate degradation. The protein operates within cell wall biogenesis; peptidoglycan recycling. In terms of biological role, catalyzes the specific phosphorylation of 1,6-anhydro-N-acetylmuramic acid (anhMurNAc) with the simultaneous cleavage of the 1,6-anhydro ring, generating MurNAc-6-P. Is required for the utilization of anhMurNAc either imported from the medium or derived from its own cell wall murein, and thus plays a role in cell wall recycling. The polypeptide is Anhydro-N-acetylmuramic acid kinase (Bacillus cereus (strain ATCC 14579 / DSM 31 / CCUG 7414 / JCM 2152 / NBRC 15305 / NCIMB 9373 / NCTC 2599 / NRRL B-3711)).